The chain runs to 333 residues: uncharacterized protein (333 aa).

This is an uncharacterized protein from Ictalurid herpesvirus 1 (strain Auburn) (IcHV-1).